We begin with the raw amino-acid sequence, 918 residues long: UPF0182 protein CPF_0011 (918 aa).

The next 7 membrane-spanning stretches (helical) occupy residues 8–28, 46–66, 91–111, 151–171, 200–220, 243–263, and 271–291; these read TVLI…NFII, LIAI…VIAI, FLLS…TTQW, AISL…ALGF, LAVL…LKSY, IFYK…FISI, and IIIS…VAIF. A compositionally biased stretch (basic and acidic residues) spans 857-869; that stretch reads EENKNSNKDETPK. Positions 857–876 are disordered; the sequence is EENKNSNKDETPKNEITSDN.

The protein belongs to the UPF0182 family.

It localises to the cell membrane. This Clostridium perfringens (strain ATCC 13124 / DSM 756 / JCM 1290 / NCIMB 6125 / NCTC 8237 / Type A) protein is UPF0182 protein CPF_0011.